The following is a 382-amino-acid chain: MASLPNGAASASAASSAAGGGPAVVDKEVDFANYFCTYSYLYHQKEMLCDRVRMDAYHSAVFRNAHHFRGKVVLDVGTGSGILAIWSAQAGARKVYAVEATNMAEHARELARANDVADIVEVIQGSMEDVVLPEKVDVIISEWMGYFLLRESMFDSVICARDRWLKPDGVMYPSHARMWLAPIRSDLAENKMEDLEIAMHDWNLFVEDTESYYGVNMNVLTKAYRAEHEKYYLKSAIWNNLHPNQVIGQAAVIKEIDCLTATVDEIREVRAQVTMPIKLDMTRLAALAGWFDVHFRGSKQNPATQEVELSTAPDVNGGTHWGQQVFLLTPPLKVNEGDNVKVSFTMVRSKENHRLMDMEFTYELHESSGKQLPAITTKIYLE.

The segment at 1-21 (MASLPNGAASASAASSAAGGG) is disordered. Residues 7–17 (GAASASAASSA) are compositionally biased toward low complexity. Residues 28–359 (EVDFANYFCT…KENHRLMDME (332 aa)) form the SAM-dependent MTase PRMT-type domain. Catalysis depends on residues glutamate 142 and glutamate 151. The tract at residues 189–229 (ENKMEDLEIAMHDWNLFVEDTESYYGVNMNVLTKAYRAEHE) is dimerization arm.

It belongs to the class I-like SAM-binding methyltransferase superfamily. Protein arginine N-methyltransferase family. In terms of assembly, ring-like homodimer.

It carries out the reaction L-arginyl-[protein] + 2 S-adenosyl-L-methionine = N(omega),N(omega)-dimethyl-L-arginyl-[protein] + 2 S-adenosyl-L-homocysteine + 2 H(+). Functionally, methylates (mono and asymmetric dimethylation) the guanidino nitrogens of arginyl residues in some proteins. The protein is Protein arginine N-methyltransferase PRMT10 (PRMT10) of Oryza sativa subsp. indica (Rice).